We begin with the raw amino-acid sequence, 212 residues long: Phosphoribosylglycinamide formyltransferase (212 aa).

12 to 14 contacts N(1)-(5-phospho-beta-D-ribosyl)glycinamide; sequence GTN. (6R)-10-formyltetrahydrofolate-binding positions include 90–93 and asparagine 107; that span reads MKIL. Histidine 109 serves as the catalytic Proton donor.

It belongs to the GART family.

The enzyme catalyses N(1)-(5-phospho-beta-D-ribosyl)glycinamide + (6R)-10-formyltetrahydrofolate = N(2)-formyl-N(1)-(5-phospho-beta-D-ribosyl)glycinamide + (6S)-5,6,7,8-tetrahydrofolate + H(+). The protein operates within purine metabolism; IMP biosynthesis via de novo pathway; N(2)-formyl-N(1)-(5-phospho-D-ribosyl)glycinamide from N(1)-(5-phospho-D-ribosyl)glycinamide (10-formyl THF route): step 1/1. Functionally, catalyzes the transfer of a formyl group from 10-formyltetrahydrofolate to 5-phospho-ribosyl-glycinamide (GAR), producing 5-phospho-ribosyl-N-formylglycinamide (FGAR) and tetrahydrofolate. The protein is Phosphoribosylglycinamide formyltransferase of Haemophilus influenzae (strain ATCC 51907 / DSM 11121 / KW20 / Rd).